Here is a 2832-residue protein sequence, read N- to C-terminus: Cyclic beta-(1,2)-glucan synthase NdvB (2832 aa).

Transmembrane regions (helical) follow at residues 411–431 (FAIA…VYAF), 444–464 (IMLL…FNTV), 810–830 (LIPV…EPTP), 831–851 (ALIW…LSLI), 880–900 (QVAL…DAIV), 938–958 (WTAP…DTGL), and 959–979 (PFIG…AWFV). Positions 1299 to 1506 (LASEARLTSL…NGQLREWFHA (208 aa)) constitute a Glycoamylase-like domain.

Belongs to the NdvB family.

It localises to the cell inner membrane. The catalysed reaction is [(1-&gt;2)-beta-D-glucosyl](n) + UDP-alpha-D-glucose = [(1-&gt;2)-beta-D-glucosyl](n+1) + UDP + H(+). Functionally, involved in the biosynthesis of cyclic beta-(1,2)-glucan. It seems that NdvB is involved in three enzymatic activities. First, it may catalyze the transfer of the first glucose from UDP-Glc to an unknown amino acid. In the second enzymatic activity (UDP-Glc:beta-(1,2) oligosaccharide glucosyltransferase), it may be responsible for chain elongation. Finally, in the third activity, it may catalyze glucan cyclization and release from the protein. NdvB is also involved in nodule invasion and in bacteroid development. The sequence is that of Cyclic beta-(1,2)-glucan synthase NdvB from Rhizobium meliloti (strain 1021) (Ensifer meliloti).